The sequence spans 1463 residues: Gag-Pol polyprotein (1463 aa).

The N-myristoyl glycine; by host moiety is linked to residue Gly-2. The segment at 7 to 31 is interaction with Gp41; sequence VLRGKKADELEKIRLRPGGKKKYRL. A Nuclear export signal motif is present at residues 16–22; it reads LEKIRLR. Positions 26–32 match the Nuclear localization signal motif; that stretch reads KKKYRLK. A disordered region spans residues 112 to 138; the sequence is TKTTEKMPSTSRPTAPPSGNGGNFPVQ. Residues 191–228 form an interaction with human PPIA/CYPA and NUP153 region; sequence NCVGDHQAAMQIIREIINEEAADWDAQHPIPGPLPAGQ. A dimerization/Multimerization of capsid protein p24 region spans residues 279–365; it reads YNPTNILDIK…GGPGQKARLM (87 aa). CCHC-type zinc fingers lie at residues 389–406 and 410–427; these read IKCW…QCRA and QGCW…KCPE. The disordered stretch occupies residues 441–508; the sequence is EAPQFPCGPN…TRDTMQRDDR (68 aa). Over residues 462–508 the composition is skewed to basic and acidic residues; that stretch reads RPSRGPTREVHAAREKAERAEREAIQRSDRGLPAARETRDTMQRDDR. The segment at 513-517 is dimerization of protease; sequence PQFSL. The 70-residue stretch at 532-601 folds into the Peptidase A2 domain; the sequence is VEVLLDTGAD…TPINIFGRNI (70 aa). The active-site For protease activity; shared with dimeric partner is Asp-537. Dimerization of protease stretches follow at residues 561–567 and 600–612; these read GIGGFIN and NILT…LNLP. Positions 655-845 constitute a Reverse transcriptase domain; sequence EGQLEEAPPT…PPYQWMGYEL (191 aa). 3 residues coordinate Mg(2+): Asp-721, Asp-796, and Asp-797. Residues 838–846 are RT 'primer grip'; the sequence is YQWMGYELW. A Tryptophan repeat motif motif is present at residues 1008-1024; sequence WEQWWDNYWQVTWIPDW. One can recognise an RNase H type-1 domain in the interval 1044–1167; it reads ILGAETFYTD…VDHLVSQGIR (124 aa). Mg(2+) contacts are provided by Asp-1053, Glu-1088, Asp-1108, and Asp-1159. The Integrase-type zinc-finger motif lies at 1173-1214; the sequence is EKIEPAQEEHEKYHSNVKELSHKFGLPKLVARQIVNTCTQCQ. Zn(2+) is bound by residues His-1182, His-1186, Cys-1210, and Cys-1213. Residues 1223–1374 form the Integrase catalytic domain; that stretch reads QVNAELGTWQ…TPAERLINMV (152 aa). 3 residues coordinate Mg(2+): Asp-1234, Asp-1286, and Glu-1322. Positions 1393–1440 form a DNA-binding region, integrase-type; that stretch reads FRVYFREGRDQLWKGPGELLWKGDGAVIVKVGADIKIIPRRKAKIIKD.

In terms of assembly, homotrimer; further assembles as hexamers of trimers. Interacts with gp41 (via C-terminus). Interacts with host CALM1; this interaction induces a conformational change in the Matrix protein, triggering exposure of the myristate group. Interacts with host AP3D1; this interaction allows the polyprotein trafficking to multivesicular bodies during virus assembly. Part of the pre-integration complex (PIC) which is composed of viral genome, matrix protein, Vpr and integrase. As to quaternary structure, homodimer; the homodimer further multimerizes as homohexamers or homopentamers. Interacts with human PPIA/CYPA. Interacts with human NUP153. Interacts with host PDZD8; this interaction stabilizes the capsid. Interacts with monkey TRIM5; this interaction destabilizes the capsid. Homodimer, whose active site consists of two apposed aspartic acid residues. In terms of assembly, heterodimer of p66 RT and p51 RT (RT p66/p51). Heterodimerization of RT is essential for DNA polymerase activity. The overall folding of the subdomains is similar in p66 RT and p51 RT but the spatial arrangements of the subdomains are dramatically different. As to quaternary structure, homotetramer; may further associate as a homohexadecamer. Part of the pre-integration complex (PIC) which is composed of viral genome, matrix protein, Vpr and integrase. Interacts with human SMARCB1/INI1 and human PSIP1/LEDGF isoform 1. Interacts with human KPNA3; this interaction might play a role in nuclear import of the pre-integration complex. Interacts with human NUP153; this interaction might play a role in nuclear import of the pre-integration complex. It depends on Mg(2+) as a cofactor. Post-translationally, specific enzymatic cleavages by the viral protease yield mature proteins. The protease is released by autocatalytic cleavage. The polyprotein is cleaved during and after budding, this process is termed maturation. Proteolytic cleavage of p66 RT removes the RNase H domain to yield the p51 RT subunit. Nucleocapsid protein p7 might be further cleaved after virus entry.

It localises to the host cell membrane. Its subcellular location is the host endosome. The protein resides in the host multivesicular body. It is found in the virion membrane. The protein localises to the host nucleus. It localises to the host cytoplasm. Its subcellular location is the virion. It carries out the reaction Endopeptidase for which the P1 residue is preferably hydrophobic.. It catalyses the reaction Endohydrolysis of RNA in RNA/DNA hybrids. Three different cleavage modes: 1. sequence-specific internal cleavage of RNA. Human immunodeficiency virus type 1 and Moloney murine leukemia virus enzymes prefer to cleave the RNA strand one nucleotide away from the RNA-DNA junction. 2. RNA 5'-end directed cleavage 13-19 nucleotides from the RNA end. 3. DNA 3'-end directed cleavage 15-20 nucleotides away from the primer terminus.. The enzyme catalyses 3'-end directed exonucleolytic cleavage of viral RNA-DNA hybrid.. The catalysed reaction is DNA(n) + a 2'-deoxyribonucleoside 5'-triphosphate = DNA(n+1) + diphosphate. Protease: The viral protease is inhibited by many synthetic protease inhibitors (PIs), such as amprenavir, atazanavir, indinavir, loprinavir, nelfinavir, ritonavir and saquinavir. Use of protease inhibitors in tritherapy regimens permit more ambitious therapeutic strategies. Reverse transcriptase/ribonuclease H: RT can be inhibited either by nucleoside RT inhibitors (NRTIs) or by non nucleoside RT inhibitors (NNRTIs). NRTIs act as chain terminators, whereas NNRTIs inhibit DNA polymerization by binding a small hydrophobic pocket near the RT active site and inducing an allosteric change in this region. Classical NRTIs are abacavir, adefovir (PMEA), didanosine (ddI), lamivudine (3TC), stavudine (d4T), tenofovir (PMPA), zalcitabine (ddC), and zidovudine (AZT). Classical NNRTIs are atevirdine (BHAP U-87201E), delavirdine, efavirenz (DMP-266), emivirine (I-EBU), and nevirapine (BI-RG-587). The tritherapies used as a basic effective treatment of AIDS associate two NRTIs and one NNRTI. Mediates, with Gag polyprotein, the essential events in virion assembly, including binding the plasma membrane, making the protein-protein interactions necessary to create spherical particles, recruiting the viral Env proteins, and packaging the genomic RNA via direct interactions with the RNA packaging sequence (Psi). Gag-Pol polyprotein may regulate its own translation, by the binding genomic RNA in the 5'-UTR. At low concentration, the polyprotein would promote translation, whereas at high concentration, the polyprotein would encapsidate genomic RNA and then shut off translation. In terms of biological role, targets the polyprotein to the plasma membrane via a multipartite membrane-binding signal, that includes its myristoylated N-terminus. Matrix protein is part of the pre-integration complex. Implicated in the release from host cell mediated by Vpu. Binds to RNA. Its function is as follows. Forms the conical core that encapsulates the genomic RNA-nucleocapsid complex in the virion. Most core are conical, with only 7% tubular. The core is constituted by capsid protein hexamer subunits. The core is disassembled soon after virion entry. Host restriction factors such as TRIM5-alpha or TRIMCyp bind retroviral capsids and cause premature capsid disassembly, leading to blocks in reverse transcription. Capsid restriction by TRIM5 is one of the factors which restricts HIV-1 to the human species. Host PIN1 apparently facilitates the virion uncoating. On the other hand, interactions with PDZD8 or CYPA stabilize the capsid. Functionally, encapsulates and protects viral dimeric unspliced genomic RNA (gRNA). Binds these RNAs through its zinc fingers. Acts as a nucleic acid chaperone which is involved in rearangement of nucleic acid secondary structure during gRNA retrotranscription. Also facilitates template switch leading to recombination. As part of the polyprotein, participates in gRNA dimerization, packaging, tRNA incorporation and virion assembly. Aspartyl protease that mediates proteolytic cleavages of Gag and Gag-Pol polyproteins during or shortly after the release of the virion from the plasma membrane. Cleavages take place as an ordered, step-wise cascade to yield mature proteins. This process is called maturation. Displays maximal activity during the budding process just prior to particle release from the cell. Also cleaves Nef and Vif, probably concomitantly with viral structural proteins on maturation of virus particles. Hydrolyzes host EIF4GI and PABP1 in order to shut off the capped cellular mRNA translation. The resulting inhibition of cellular protein synthesis serves to ensure maximal viral gene expression and to evade host immune response. In terms of biological role, multifunctional enzyme that converts the viral RNA genome into dsDNA in the cytoplasm, shortly after virus entry into the cell. This enzyme displays a DNA polymerase activity that can copy either DNA or RNA templates, and a ribonuclease H (RNase H) activity that cleaves the RNA strand of RNA-DNA heteroduplexes in a partially processive 3' to 5' endonucleasic mode. Conversion of viral genomic RNA into dsDNA requires many steps. A tRNA(3)-Lys binds to the primer-binding site (PBS) situated at the 5'-end of the viral RNA. RT uses the 3' end of the tRNA primer to perform a short round of RNA-dependent minus-strand DNA synthesis. The reading proceeds through the U5 region and ends after the repeated (R) region which is present at both ends of viral RNA. The portion of the RNA-DNA heteroduplex is digested by the RNase H, resulting in a ssDNA product attached to the tRNA primer. This ssDNA/tRNA hybridizes with the identical R region situated at the 3' end of viral RNA. This template exchange, known as minus-strand DNA strong stop transfer, can be either intra- or intermolecular. RT uses the 3' end of this newly synthesized short ssDNA to perform the RNA-dependent minus-strand DNA synthesis of the whole template. RNase H digests the RNA template except for two polypurine tracts (PPTs) situated at the 5'-end and near the center of the genome. It is not clear if both polymerase and RNase H activities are simultaneous. RNase H probably can proceed both in a polymerase-dependent (RNA cut into small fragments by the same RT performing DNA synthesis) and a polymerase-independent mode (cleavage of remaining RNA fragments by free RTs). Secondly, RT performs DNA-directed plus-strand DNA synthesis using the PPTs that have not been removed by RNase H as primers. PPTs and tRNA primers are then removed by RNase H. The 3' and 5' ssDNA PBS regions hybridize to form a circular dsDNA intermediate. Strand displacement synthesis by RT to the PBS and PPT ends produces a blunt ended, linear dsDNA copy of the viral genome that includes long terminal repeats (LTRs) at both ends. Its function is as follows. Catalyzes viral DNA integration into the host chromosome, by performing a series of DNA cutting and joining reactions. This enzyme activity takes place after virion entry into a cell and reverse transcription of the RNA genome in dsDNA. The first step in the integration process is 3' processing. This step requires a complex comprising the viral genome, matrix protein, Vpr and integrase. This complex is called the pre-integration complex (PIC). The integrase protein removes 2 nucleotides from each 3' end of the viral DNA, leaving recessed CA OH's at the 3' ends. In the second step, the PIC enters cell nucleus. This process is mediated through integrase and Vpr proteins, and allows the virus to infect a non dividing cell. This ability to enter the nucleus is specific of lentiviruses, other retroviruses cannot and rely on cell division to access cell chromosomes. In the third step, termed strand transfer, the integrase protein joins the previously processed 3' ends to the 5' ends of strands of target cellular DNA at the site of integration. The 5'-ends are produced by integrase-catalyzed staggered cuts, 5 bp apart. A Y-shaped, gapped, recombination intermediate results, with the 5'-ends of the viral DNA strands and the 3' ends of target DNA strands remaining unjoined, flanking a gap of 5 bp. The last step is viral DNA integration into host chromosome. This involves host DNA repair synthesis in which the 5 bp gaps between the unjoined strands are filled in and then ligated. Since this process occurs at both cuts flanking the HIV genome, a 5 bp duplication of host DNA is produced at the ends of HIV-1 integration. Alternatively, Integrase may catalyze the excision of viral DNA just after strand transfer, this is termed disintegration. This chain is Gag-Pol polyprotein (gag-pol), found in Human immunodeficiency virus type 2 subtype A (isolate ST) (HIV-2).